We begin with the raw amino-acid sequence, 212 residues long: Small ribosomal subunit protein uS19m (212 aa).

A mitochondrion-targeting transit peptide spans 1–29 (MAFCTKLGGHWKQGVNVPVSSMLGSLRYM). Residues 31–109 (TKLYIGGLSP…FNISVNVAKD (79 aa)) form the RRM domain.

This sequence belongs to the universal ribosomal protein uS19 family. Component of the mitochondrial ribosome small subunit.

It is found in the mitochondrion. Its function is as follows. The RNA-binding domain found in RPS19 may functionally replace the missing mitochondrial RPS13. This chain is Small ribosomal subunit protein uS19m (RPS19), found in Arabidopsis thaliana (Mouse-ear cress).